We begin with the raw amino-acid sequence, 131 residues long: Guanyl-specific ribonuclease F1 (131 aa).

The signal sequence occupies residues 1-25 (MLFFKSIASLAALVSLAVASPIESR). Q26 is modified (pyrrolidone carboxylic acid). Disulfide bonds link C31-C127 and C49-C108. H65 is an active-site residue. E83 acts as the Proton acceptor in catalysis. H116 serves as the catalytic Proton donor.

The protein belongs to the ribonuclease N1/T1 family.

The enzyme catalyses [RNA] containing guanosine + H2O = an [RNA fragment]-3'-guanosine-3'-phosphate + a 5'-hydroxy-ribonucleotide-3'-[RNA fragment].. The protein is Guanyl-specific ribonuclease F1 of Fusarium fujikuroi (Bakanae and foot rot disease fungus).